The primary structure comprises 258 residues: Trifolitoxin-processing protein TfxF (258 aa).

Its function is as follows. The actions of the proteins TfxB, TfxD and TfxF are implicated in the processing of the inactive trifolitoxin (TfxA) precursor into the active peptide. This Rhizobium leguminosarum bv. trifolii protein is Trifolitoxin-processing protein TfxF (tfxF).